Reading from the N-terminus, the 453-residue chain is DDB1- and CUL4-associated factor 12 (453 aa).

The span at 1-12 (MARKAVSRKRKA) shows a compositional bias: basic residues. The disordered stretch occupies residues 1 to 34 (MARKAVSRKRKASASPGAGSDAQGPQFGWDHSLH). Positions 1-38 (MARKAVSRKRKASASPGAGSDAQGPQFGWDHSLHKRKR) are required for nuclear location and interaction with MOV10. Ser15 bears the Phosphoserine mark. WD repeat units follow at residues 138 to 178 (QQGC…PVCV), 182 to 220 (GHKD…LTKS), 250 to 289 (PDNC…SKLL), and 338 to 375 (ERGS…FLEE).

This sequence belongs to the WD repeat DCAF12 family. In terms of assembly, component of the DCX(DCAF12) E3 ubiquitin ligase complex, at least composed of CUL4 (CUL4A or CUL4B), DDB1, DCAF12 and RBX1.

The protein resides in the cytoplasm. It is found in the cytoskeleton. It localises to the microtubule organizing center. The protein localises to the centrosome. Its subcellular location is the nucleus. Its pathway is protein modification; protein ubiquitination. Functionally, substrate-recognition component of a DCX (DDB1-CUL4-X-box) E3 ubiquitin-protein ligase complex of the DesCEND (destruction via C-end degrons) pathway, which recognizes a C-degron located at the extreme C terminus of target proteins, leading to their ubiquitination and degradation. The C-degron recognized by the DesCEND pathway is usually a motif of less than ten residues and can be present in full-length proteins, truncated proteins or proteolytically cleaved forms. The DCX(DCAF12) complex specifically recognizes proteins with a diglutamate (Glu-Glu) at the C-terminus, such as MAGEA3, MAGEA6 and CCT5, leading to their ubiquitination and degradation. Ubiquitination of MAGEA3, MAGEA6 by DCX(DCAF12) complex is required for starvation-induced autophagy. Also directly recognizes the C-terminal glutamate-leucine (Glu-Leu) degron as an alternative degron in proteins such as MOV10, leading to their ubiquitination and degradation. Controls the protein level of MOV10 during spermatogenesis and in T cells, especially after their activation. This chain is DDB1- and CUL4-associated factor 12, found in Mus musculus (Mouse).